Consider the following 235-residue polypeptide: Large ribosomal subunit protein uL1 (235 aa).

This sequence belongs to the universal ribosomal protein uL1 family. As to quaternary structure, part of the 50S ribosomal subunit.

Functionally, binds directly to 23S rRNA. The L1 stalk is quite mobile in the ribosome, and is involved in E site tRNA release. In terms of biological role, protein L1 is also a translational repressor protein, it controls the translation of the L11 operon by binding to its mRNA. This is Large ribosomal subunit protein uL1 from Methylibium petroleiphilum (strain ATCC BAA-1232 / LMG 22953 / PM1).